Reading from the N-terminus, the 503-residue chain is Nuclear respiratory factor 1 (503 aa).

Positions 1–78 (MEEHGVTQTE…AHLAAAGPVG (78 aa)) are dimerization. The tract at residues 36 to 57 (SMLSADEDSPSSPEDTSYDDSD) is disordered. Phosphoserine; by CK2 is present on residues Ser-39, Ser-44, Ser-46, Ser-47, and Ser-52. Residues 88–116 (GKKRKRPHVFESNPSIRKRQQTRLLRKLR) carry the Nuclear localization signal motif. Residues 109–305 (TRLLRKLRAT…SIAHLVPSQT (197 aa)) mediate DNA binding. Residue Lys-139 forms a Glycyl lysine isopeptide (Lys-Gly) (interchain with G-Cter in SUMO2) linkage. The interval 301-476 (VPSQTVVQTF…AQGNGPVQVA (176 aa)) is required for transcriptional activation.

Belongs to the NRF1/Ewg family. As to quaternary structure, homodimer. Binds DNA as a dimer. Interacts with PPRC1. Post-translationally, phosphorylation enhances DNA binding. Ubiquitously expressed with strongest expression in skeletal muscle.

The protein resides in the nucleus. Transcription factor that activates the expression of the EIF2S1 (EIF2-alpha) gene. Links the transcriptional modulation of key metabolic genes to cellular growth and development. Implicated in the control of nuclear genes required for respiration, heme biosynthesis, and mitochondrial DNA transcription and replication. The chain is Nuclear respiratory factor 1 (NRF1) from Homo sapiens (Human).